The sequence spans 226 residues: N-(5'-phosphoribosyl)anthranilate isomerase (226 aa).

Belongs to the TrpF family.

It catalyses the reaction N-(5-phospho-beta-D-ribosyl)anthranilate = 1-(2-carboxyphenylamino)-1-deoxy-D-ribulose 5-phosphate. Its pathway is amino-acid biosynthesis; L-tryptophan biosynthesis; L-tryptophan from chorismate: step 3/5. The chain is N-(5'-phosphoribosyl)anthranilate isomerase (TRP1) from Candida albicans (strain SC5314 / ATCC MYA-2876) (Yeast).